The chain runs to 390 residues: MKATGIVVEYNPFHNGHKLHLNKARELTQADVVIAVMSGSFVQRGEPAIIPKWERAKMALAAGVDMVIELPVSFATQHATIFAEEAVRILDAIHVDTLFFGSEHGVAEDFTFAAKKVVENEARFDEAIQLALVDKKTSYARAYTEAFKKLFGQNLLDITKPNNILGFHYALAAQNQNPSISLQTIPREHAGYHDEEANHDQIASATAIRKLILAGKLEEASHYLPASSIAILRNYEGPFLSWKDYWSFLQYRLIQAGSEELEGIRGVSEGIQNRMQQAATKAQNFSDFIELTKTKRYSNTRLQRTALQILLNARSQTSSPYIRILGMNKTGQQYLSLHKKNISLPIVTTVSKAPVGLLEEELRATNIYTLAKGLENYQAGDFHIPPILTL.

Residues 7–20, Gly101, Asn162, and Arg187 contribute to the ATP site; that span reads VVEYNPFHNGHKLH.

This sequence belongs to the TmcAL family.

It localises to the cytoplasm. It catalyses the reaction cytidine(34) in elongator tRNA(Met) + acetate + ATP = N(4)-acetylcytidine(34) in elongator tRNA(Met) + AMP + diphosphate. Its function is as follows. Catalyzes the formation of N(4)-acetylcytidine (ac(4)C) at the wobble position of elongator tRNA(Met), using acetate and ATP as substrates. First activates an acetate ion to form acetyladenylate (Ac-AMP) and then transfers the acetyl group to tRNA to form ac(4)C34. This chain is tRNA(Met) cytidine acetate ligase, found in Listeria monocytogenes serotype 4a (strain HCC23).